The following is a 632-amino-acid chain: MAEETQHNKLAAAKKKLKEYWQKNSPRVPAGANRNRKTNGSIPQTATSGGCQPPGDSATGFHREGPTSSATLKDLESPCQERAVVLDSRSVEISQLKNTIKSLKQQKKQVEHQLEEEKKANNKKQKAKRVLEVQLQTLNIQKEELNTDLYHMKRSLRYFEEKSKDLAVRLQHSLQRKGELESVLSDVMATQKKKANQLSSPSKAGTEWKLEQSMREEALLKVQLTQLKESFQQVQLERDEYSEHLKGERARWQQRMRKMSQEICTLKKEKQQDMRRVEKLERSLSKLKNQMAEPLPPEPPAVPSEVELQHLRKELERVAGELQAQVKNNQRISLLNQRQEERIREQEERLRKQEERIQEQHKSLQQLAKPQSVFEEPNNENKSTLQLEQQVKELQEKLGEEHLEAASQQNQQLTAQLSLMALPGEGHGGEHLDSEGEEAPQPMPSVPEDPESREAMSSFMDHLEEKADLSELVKKQELRFIQYWQERCHQKIHHLLSEPGGRAKDAALGGGHHQAGAQGGDEGEAAGAAADGIAAYSNYNNGHRKFLAAAHNSADEPGPGAPAPQELGAADKHGDLCEVSLTSSAQGEAREDPLLDKPTAQPIVQDHQEHPGLGSNCCVPFFCWAWLPRRRR.

The disordered stretch occupies residues 1 to 77 (MAEETQHNKL…SSATLKDLES (77 aa)). Polar residues predominate over residues 38–50 (TNGSIPQTATSGG). 2 coiled-coil regions span residues 86–154 (LDSR…HMKR) and 209–421 (KLEQ…SLMA). The span at 352–362 (KQEERIQEQHK) shows a compositional bias: basic and acidic residues. 3 disordered regions span residues 352-384 (KQEERIQEQHKSLQQLAKPQSVFEEPNNENKST), 422-456 (LPGEGHGGEHLDSEGEEAPQPMPSVPEDPESREAM), and 505-524 (DAALGGGHHQAGAQGGDEGE). A compositionally biased stretch (gly residues) spans 508–520 (LGGGHHQAGAQGG).

The protein belongs to the GOLGA8 family.

In Homo sapiens (Human), this protein is Golgin subfamily A member 8M.